Here is a 318-residue protein sequence, read N- to C-terminus: tRNA methyltransferase 10 homolog B (318 aa).

Basic and acidic residues predominate over residues 1–10 (MDCKSEESAQ). The segment at 1-105 (MDCKSEESAQ…DPGNGTCPQH (105 aa)) is disordered. A compositionally biased stretch (polar residues) spans 52–63 (SPANSAVWSSKN). Over residues 64 to 83 (MQRKQRHWERIVSSKKSKRK) the composition is skewed to basic residues. The stretch at 72 to 93 (ERIVSSKKSKRKQERERRKAKR) forms a coiled coil. The segment covering 84-96 (QERERRKAKRAED) has biased composition (basic and acidic residues). The 198-residue stretch at 114 to 311 (TKEKLLEAKH…KGVSPGKGYV (198 aa)) folds into the SAM-dependent MTase TRM10-type domain.

The protein belongs to the class IV-like SAM-binding methyltransferase superfamily. TRM10 family.

It carries out the reaction guanosine(9) in tRNA + S-adenosyl-L-methionine = N(1)-methylguanosine(9) in tRNA + S-adenosyl-L-homocysteine + H(+). Functionally, S-adenosyl-L-methionine-dependent guanine N(1)-methyltransferase that catalyzes the formation of N(1)-methylguanine at position 9 (m1G9) in tRNAs. Probably not able to catalyze formation of N(1)-methyladenine at position 9 (m1A9) in tRNAs. This chain is tRNA methyltransferase 10 homolog B (Trmt10b), found in Mus musculus (Mouse).